Here is a 273-residue protein sequence, read N- to C-terminus: Large ribosomal subunit protein uL2cz/uL2cy (273 aa).

Disordered stretches follow at residues 1–27 and 225–273; these read MAKH…SNPR and PVDH…RRRK.

This sequence belongs to the universal ribosomal protein uL2 family. As to quaternary structure, part of the 50S ribosomal subunit.

It localises to the plastid. Its subcellular location is the chloroplast. The protein is Large ribosomal subunit protein uL2cz/uL2cy (rpl2-A) of Lolium perenne (Perennial ryegrass).